The chain runs to 103 residues: Large ribosomal subunit protein uL24 (103 aa).

This sequence belongs to the universal ribosomal protein uL24 family. Part of the 50S ribosomal subunit.

One of two assembly initiator proteins, it binds directly to the 5'-end of the 23S rRNA, where it nucleates assembly of the 50S subunit. Its function is as follows. One of the proteins that surrounds the polypeptide exit tunnel on the outside of the subunit. This chain is Large ribosomal subunit protein uL24, found in Haemophilus influenzae (strain PittEE).